We begin with the raw amino-acid sequence, 435 residues long: Serine hydroxymethyltransferase (435 aa).

Residues leucine 133 and 137–139 (GHL) each bind (6S)-5,6,7,8-tetrahydrofolate. Lysine 242 bears the N6-(pyridoxal phosphate)lysine mark.

The protein belongs to the SHMT family. Homodimer. The cofactor is pyridoxal 5'-phosphate.

Its subcellular location is the cytoplasm. It carries out the reaction (6R)-5,10-methylene-5,6,7,8-tetrahydrofolate + glycine + H2O = (6S)-5,6,7,8-tetrahydrofolate + L-serine. It participates in one-carbon metabolism; tetrahydrofolate interconversion. Its pathway is amino-acid biosynthesis; glycine biosynthesis; glycine from L-serine: step 1/1. Its function is as follows. Catalyzes the reversible interconversion of serine and glycine with tetrahydrofolate (THF) serving as the one-carbon carrier. This reaction serves as the major source of one-carbon groups required for the biosynthesis of purines, thymidylate, methionine, and other important biomolecules. Also exhibits THF-independent aldolase activity toward beta-hydroxyamino acids, producing glycine and aldehydes, via a retro-aldol mechanism. The chain is Serine hydroxymethyltransferase from Hyphomonas neptunium (strain ATCC 15444).